The following is a 159-amino-acid chain: Phosphopantetheine adenylyltransferase (159 aa).

T10 contributes to the substrate binding site. ATP contacts are provided by residues 10–11 and H18; that span reads TF. Residues K42, M74, and R88 each contribute to the substrate site. ATP is bound by residues 89-91, E99, and 124-130; these read GLR and WSFISSS.

The protein belongs to the bacterial CoaD family. In terms of assembly, homohexamer. Mg(2+) is required as a cofactor.

It localises to the cytoplasm. The catalysed reaction is (R)-4'-phosphopantetheine + ATP + H(+) = 3'-dephospho-CoA + diphosphate. It participates in cofactor biosynthesis; coenzyme A biosynthesis; CoA from (R)-pantothenate: step 4/5. Functionally, reversibly transfers an adenylyl group from ATP to 4'-phosphopantetheine, yielding dephospho-CoA (dPCoA) and pyrophosphate. The sequence is that of Phosphopantetheine adenylyltransferase from Escherichia coli (strain UTI89 / UPEC).